The primary structure comprises 86 residues: Gas vesicle protein M (86 aa).

It belongs to the gas vesicle GvpA family. As to quaternary structure, gvpF to GvpM interact with each other in vitro, and may form multi-subunit complex(es). Might interact with GvpA.

The protein resides in the gas vesicle. In terms of biological role, proteins GvpF to GvpM might be involved in nucleating gas vesicle formation. A minor component of the gas vesicle. Gas vesicles are small, hollow, gas filled protein structures found in some microorganisms. They allow positioning of halobacteria at the optimal depth for growth in the poorly aerated, shallow brine pools of their habitat. Expression of a 9.5 kb mc-vac DNA fragment containing 2 divergently transcribed regions (gvpD-gvpE-gvpF-gvpG-gvpH-gvpI-gvpJ-gvpK-gvpL-gvpM and gvpA-gvpC-gvpN-gvpO) allows H.volcanii to produce gas vesicles. This chain is Gas vesicle protein M, found in Haloferax mediterranei (strain ATCC 33500 / DSM 1411 / JCM 8866 / NBRC 14739 / NCIMB 2177 / R-4) (Halobacterium mediterranei).